Reading from the N-terminus, the 236-residue chain is Ureidoacrylate amidohydrolase RutB (236 aa).

The active-site Proton acceptor is the aspartate 24. Lysine 133 is an active-site residue. Catalysis depends on cysteine 166, which acts as the Nucleophile.

Belongs to the isochorismatase family. RutB subfamily.

The enzyme catalyses (Z)-3-ureidoacrylate + H2O + H(+) = (Z)-3-aminoacrylate + NH4(+) + CO2. The catalysed reaction is (Z)-3-ureidoacrylate + H2O = (Z)-3-aminoacrylate + carbamate + H(+). It carries out the reaction (Z)-2-methylureidoacrylate + H2O + H(+) = (Z)-2-methylaminoacrylate + NH4(+) + CO2. Hydrolyzes ureidoacrylate to form aminoacrylate and carbamate. The carbamate hydrolyzes spontaneously, thereby releasing one of the nitrogen atoms of the pyrimidine ring as ammonia and one of its carbon atoms as CO2. The protein is Ureidoacrylate amidohydrolase RutB of Klebsiella variicola (strain At-22).